Consider the following 346-residue polypeptide: Membrane progestin receptor alpha (346 aa).

Topologically, residues 1–72 are cytoplasmic; sequence MAMAQKLSHL…RTLFQQHNEA (72 aa). A helical membrane pass occupies residues 73 to 93; sequence VNVWTHLLAALVLLLRLALFV. At 94-103 the chain is on the extracellular side; the sequence is ETVDFWGDPH. Residues 104 to 124 traverse the membrane as a helical segment; it reads ALPLFIIVLASFTYLSFSALA. At 125 to 137 the chain is on the cytoplasmic side; sequence HLLQAKSEFWHYS. Residues 138–158 form a helical membrane-spanning segment; the sequence is FFFLDYVGVAVYQFGSALAHF. Topologically, residues 159–169 are extracellular; it reads YYAIEPAWHAQ. A helical membrane pass occupies residues 170-190; sequence VQAVFLPMAAFLAWLSCIGSC. Residues 191–237 are Cytoplasmic-facing; the sequence is YNKYIQKPGLLGRTCQEVPSVLAYALDISPVVHRIFVSSDPTTDDPA. The helical transmembrane segment at 238 to 258 threads the bilayer; sequence LLYHKCQVVFFLLAAAFFSTF. Residues 259 to 276 are Extracellular-facing; that stretch reads MPERWFPGSCHVFGQGHQ. The chain crosses the membrane as a helical span at residues 277–297; sequence LFHIFLVLCTLAQLEAVALDY. Residues 298–316 lie on the Cytoplasmic side of the membrane; that stretch reads EARRPIYEPLHTHWPHNFS. A helical transmembrane segment spans residues 317–337; sequence GLFLLTVGSSILTAFLLSQLV. The Extracellular segment spans residues 338–346; it reads QRKLDQKTK.

It belongs to the ADIPOR family. Expressed in a wide range of tissues including ovary, testis, placenta, uterus and bladder.

The protein localises to the cell membrane. Plasma membrane progesterone (P4) receptor coupled to G proteins. Seems to act through a G(i) mediated pathway. May be involved in oocyte maturation. Involved in neurosteroid inhibition of apoptosis. Also binds dehydroepiandrosterone (DHEA), pregnanolone, pregnenolone and allopregnanolone. This is Membrane progestin receptor alpha from Homo sapiens (Human).